A 449-amino-acid chain; its full sequence is NADP-specific glutamate dehydrogenase (449 aa).

Residues Lys92, Gln113, and Lys116 each coordinate substrate. Lys128 serves as the catalytic Proton donor. Gly167 provides a ligand contact to substrate. Residues Thr211 and Asn242 each coordinate NADP(+). Ser380 is a binding site for substrate.

It belongs to the Glu/Leu/Phe/Val dehydrogenases family. In terms of assembly, homohexamer.

It catalyses the reaction L-glutamate + NADP(+) + H2O = 2-oxoglutarate + NH4(+) + NADPH + H(+). In terms of biological role, catalyzes the reversible oxidative deamination of glutamate to alpha-ketoglutarate and ammonia. The polypeptide is NADP-specific glutamate dehydrogenase (gdhA) (Haemophilus influenzae (strain ATCC 51907 / DSM 11121 / KW20 / Rd)).